We begin with the raw amino-acid sequence, 592 residues long: Endoribonuclease Arlr (592 aa).

Residues methionine 1 to alanine 24 form the signal peptide. The tract at residues proline 83–threonine 329 is disordered. Residues proline 109–proline 120 are compositionally biased toward polar residues. 2 stretches are compositionally biased toward low complexity: residues proline 134 to serine 144 and glycine 188 to threonine 209. Pro residues-rich tracts occupy residues leucine 234 to glycine 249 and leucine 258 to proline 267. The span at proline 268–alanine 294 shows a compositional bias: low complexity. The EndoU domain occupies threonine 329–isoleucine 592. Residues histidine 473, histidine 488, and lysine 531 contribute to the active site.

It belongs to the ENDOU family. Monomer. It depends on Mn(2+) as a cofactor. Predominantly expressed in head. Expressed in fat body cells.

The protein resides in the endoplasmic reticulum lumen. Its subcellular location is the secreted. It carries out the reaction a ribonucleotidyl-ribonucleotide-RNA + H2O = a 3'-end 3'-phospho-ribonucleotide-RNA + a 5'-end dephospho-ribonucleoside-RNA + H(+). Functionally, endoribonuclease that cleaves single-stranded RNAs; unlike its paralog EndoU it does not appear to preferentially cleave at uridylates and releases linear products instead of products that have 2'-3'-cyclic phosphate termini. Preferentially cleaves single stranded RNA at sites with AU, UC and poly-U sites cleaved less efficiently. Targets mRNAs encoding proteins involved in lipid metabolism, particularly those involved in lipolysis, to regulate their expression. This is Endoribonuclease Arlr from Drosophila melanogaster (Fruit fly).